Reading from the N-terminus, the 58-residue chain is Small ribosomal subunit protein bS21 (58 aa).

It belongs to the bacterial ribosomal protein bS21 family.

This chain is Small ribosomal subunit protein bS21, found in Synechococcus sp. (strain CC9605).